Consider the following 203-residue polypeptide: Elongation factor Ts (203 aa).

The segment at 80–83 (TDFV) is involved in Mg(2+) ion dislocation from EF-Tu.

This sequence belongs to the EF-Ts family.

It localises to the cytoplasm. Associates with the EF-Tu.GDP complex and induces the exchange of GDP to GTP. It remains bound to the aminoacyl-tRNA.EF-Tu.GTP complex up to the GTP hydrolysis stage on the ribosome. The sequence is that of Elongation factor Ts from Moorella thermoacetica (strain ATCC 39073 / JCM 9320).